The sequence spans 171 residues: Non-specific lipid transfer protein GPI-anchored 19 (171 aa).

A signal peptide spans 1 to 18 (MILAILALVIATFLYGGA). 4 disulfides stabilise this stretch: C25/C66, C35/C50, C51/C93, and C64/C103. N72 and N82 each carry an N-linked (GlcNAc...) asparagine glycan. The interval 113 to 149 (LPANTPVGSPRSAPSPSGTTSPANTPSGSKKFPLSNE) is disordered. Over residues 118–141 (PVGSPRSAPSPSGTTSPANTPSGS) the composition is skewed to low complexity. A lipid anchor (GPI-anchor amidated serine) is attached at S147. An N-linked (GlcNAc...) asparagine glycan is attached at N148. A propeptide spans 148-171 (NESSSKSNVIILSFVSIALVLAII) (removed in mature form).

Belongs to the plant LTP family.

It localises to the cell membrane. Probable lipid transfer protein. This Arabidopsis thaliana (Mouse-ear cress) protein is Non-specific lipid transfer protein GPI-anchored 19.